Here is a 570-residue protein sequence, read N- to C-terminus: Phosphoenolpyruvate-protein phosphotransferase (570 aa).

Catalysis depends on His189, which acts as the Tele-phosphohistidine intermediate. Phosphoenolpyruvate is bound by residues Arg296 and Arg332. Mg(2+)-binding residues include Glu431 and Asp455. Phosphoenolpyruvate-binding positions include 454-455 (ND) and Arg465. Cys502 functions as the Proton donor in the catalytic mechanism.

The protein belongs to the PEP-utilizing enzyme family. Homodimer. Mg(2+) serves as cofactor.

Its subcellular location is the cytoplasm. The catalysed reaction is L-histidyl-[protein] + phosphoenolpyruvate = N(pros)-phospho-L-histidyl-[protein] + pyruvate. Its function is as follows. General (non sugar-specific) component of the phosphoenolpyruvate-dependent sugar phosphotransferase system (sugar PTS). This major carbohydrate active-transport system catalyzes the phosphorylation of incoming sugar substrates concomitantly with their translocation across the cell membrane. Enzyme I transfers the phosphoryl group from phosphoenolpyruvate (PEP) to the phosphoryl carrier protein (HPr). The sequence is that of Phosphoenolpyruvate-protein phosphotransferase (ptsI) from Buchnera aphidicola subsp. Schizaphis graminum (strain Sg).